Here is a 154-residue protein sequence, read N- to C-terminus: Myoglobin (154 aa).

The region spanning 2 to 148 (GLSDGEWQLV…FRNDIAAKYK (147 aa)) is the Globin domain. At Ser4 the chain carries Phosphoserine. His65 lines the nitrite pocket. An O2-binding site is contributed by His65. A Phosphothreonine modification is found at Thr68. His94 provides a ligand contact to heme b.

It belongs to the globin family. Monomeric.

Its subcellular location is the cytoplasm. It is found in the sarcoplasm. It catalyses the reaction Fe(III)-heme b-[protein] + nitric oxide + H2O = Fe(II)-heme b-[protein] + nitrite + 2 H(+). It carries out the reaction H2O2 + AH2 = A + 2 H2O. Monomeric heme protein which primary function is to store oxygen and facilitate its diffusion within muscle tissues. Reversibly binds oxygen through a pentacoordinated heme iron and enables its timely and efficient release as needed during periods of heightened demand. Depending on the oxidative conditions of tissues and cells, and in addition to its ability to bind oxygen, it also has a nitrite reductase activity whereby it regulates the production of bioactive nitric oxide. Under stress conditions, like hypoxia and anoxia, it also protects cells against reactive oxygen species thanks to its pseudoperoxidase activity. This Tupaia glis (Common tree shrew) protein is Myoglobin (MB).